The chain runs to 142 residues: Large ribosomal subunit protein uL11 (142 aa).

The protein belongs to the universal ribosomal protein uL11 family. Part of the ribosomal stalk of the 50S ribosomal subunit. Interacts with L10 and the large rRNA to form the base of the stalk. L10 forms an elongated spine to which L12 dimers bind in a sequential fashion forming a multimeric L10(L12)X complex. Post-translationally, one or more lysine residues are methylated.

Its function is as follows. Forms part of the ribosomal stalk which helps the ribosome interact with GTP-bound translation factors. This chain is Large ribosomal subunit protein uL11, found in Rhodospirillum rubrum (strain ATCC 11170 / ATH 1.1.1 / DSM 467 / LMG 4362 / NCIMB 8255 / S1).